The chain runs to 190 residues: ATP synthase subunit delta (190 aa).

This sequence belongs to the ATPase delta chain family. In terms of assembly, F-type ATPases have 2 components, F(1) - the catalytic core - and F(0) - the membrane proton channel. F(1) has five subunits: alpha(3), beta(3), gamma(1), delta(1), epsilon(1). F(0) has three main subunits: a(1), b(2) and c(10-14). The alpha and beta chains form an alternating ring which encloses part of the gamma chain. F(1) is attached to F(0) by a central stalk formed by the gamma and epsilon chains, while a peripheral stalk is formed by the delta and b chains.

It localises to the cell inner membrane. In terms of biological role, f(1)F(0) ATP synthase produces ATP from ADP in the presence of a proton or sodium gradient. F-type ATPases consist of two structural domains, F(1) containing the extramembraneous catalytic core and F(0) containing the membrane proton channel, linked together by a central stalk and a peripheral stalk. During catalysis, ATP synthesis in the catalytic domain of F(1) is coupled via a rotary mechanism of the central stalk subunits to proton translocation. This protein is part of the stalk that links CF(0) to CF(1). It either transmits conformational changes from CF(0) to CF(1) or is implicated in proton conduction. This is ATP synthase subunit delta from Anaplasma marginale (strain Florida).